Here is a 202-residue protein sequence, read N- to C-terminus: Holliday junction branch migration complex subunit RuvA (202 aa).

Positions 1 to 63 (MIAFLSGRVV…EDSLTLFGFA (63 aa)) are domain I. Residues 64 to 142 (DDDERDTFER…EPGGDTAATP (79 aa)) form a domain II region. The interval 143-152 (EQSAAAAPRN) is flexible linker. Residues 152–202 (NWRAQVVSGLVNLGWSTREAEAAADAVAAEAGEQPDVAALLRSALRRLSRA) are domain III.

The protein belongs to the RuvA family. Homotetramer. Forms an RuvA(8)-RuvB(12)-Holliday junction (HJ) complex. HJ DNA is sandwiched between 2 RuvA tetramers; dsDNA enters through RuvA and exits via RuvB. An RuvB hexamer assembles on each DNA strand where it exits the tetramer. Each RuvB hexamer is contacted by two RuvA subunits (via domain III) on 2 adjacent RuvB subunits; this complex drives branch migration. In the full resolvosome a probable DNA-RuvA(4)-RuvB(12)-RuvC(2) complex forms which resolves the HJ.

The protein localises to the cytoplasm. In terms of biological role, the RuvA-RuvB-RuvC complex processes Holliday junction (HJ) DNA during genetic recombination and DNA repair, while the RuvA-RuvB complex plays an important role in the rescue of blocked DNA replication forks via replication fork reversal (RFR). RuvA specifically binds to HJ cruciform DNA, conferring on it an open structure. The RuvB hexamer acts as an ATP-dependent pump, pulling dsDNA into and through the RuvAB complex. HJ branch migration allows RuvC to scan DNA until it finds its consensus sequence, where it cleaves and resolves the cruciform DNA. The chain is Holliday junction branch migration complex subunit RuvA from Thermobifida fusca (strain YX).